Consider the following 268-residue polypeptide: 1D-myo-inositol 2-acetamido-2-deoxy-alpha-D-glucopyranoside deacetylase (268 aa).

Zn(2+) is bound by residues H7, D10, and H142.

Belongs to the MshB deacetylase family. Zn(2+) serves as cofactor.

The catalysed reaction is 1D-myo-inositol 2-acetamido-2-deoxy-alpha-D-glucopyranoside + H2O = 1D-myo-inositol 2-amino-2-deoxy-alpha-D-glucopyranoside + acetate. Functionally, catalyzes the deacetylation of 1D-myo-inositol 2-acetamido-2-deoxy-alpha-D-glucopyranoside (GlcNAc-Ins) in the mycothiol biosynthesis pathway. The chain is 1D-myo-inositol 2-acetamido-2-deoxy-alpha-D-glucopyranoside deacetylase from Saccharomonospora viridis (strain ATCC 15386 / DSM 43017 / JCM 3036 / CCUG 5913 / NBRC 12207 / NCIMB 9602 / P101) (Thermoactinomyces viridis).